The sequence spans 87 residues: Small ribosomal subunit protein uS17 (87 aa).

This sequence belongs to the universal ribosomal protein uS17 family. As to quaternary structure, part of the 30S ribosomal subunit.

In terms of biological role, one of the primary rRNA binding proteins, it binds specifically to the 5'-end of 16S ribosomal RNA. This Geobacillus sp. (strain WCH70) protein is Small ribosomal subunit protein uS17.